The chain runs to 779 residues: Subtilisin-like protease SBT3.18 (779 aa).

An N-terminal signal peptide occupies residues 1–21 (MYFWVMFFTLMIKVKLYITNG). The propeptide at 22-109 (DIFQNRPTVY…VFKSKSLKLH (88 aa)) is activation peptide. One can recognise an Inhibitor I9 domain in the interval 30-109 (VYVVYLGANR…VFKSKSLKLH (80 aa)). An N-linked (GlcNAc...) asparagine glycan is attached at N84. A Peptidase S8 domain is found at 113–621 (SWDFLGLAVD…AGHINPLKAM (509 aa)). Active-site charge relay system residues include D144 and H221. N-linked (GlcNAc...) asparagine glycans are attached at residues N236 and N406. S553 serves as the catalytic Charge relay system.

Belongs to the peptidase S8 family.

The protein resides in the secreted. The polypeptide is Subtilisin-like protease SBT3.18 (Arabidopsis thaliana (Mouse-ear cress)).